Here is a 241-residue protein sequence, read N- to C-terminus: Queuine tRNA-ribosyltransferase-like protein (241 aa).

The protein belongs to the queuine tRNA-ribosyltransferase family.

The sequence is that of Queuine tRNA-ribosyltransferase-like protein from Plasmodium falciparum.